Consider the following 51-residue polypeptide: Large ribosomal subunit protein eL39 (51 aa).

Residues 1 to 22 (MAAQKSFRIKQKMAKAKKQNRP) form a disordered region. A compositionally biased stretch (basic residues) spans 7 to 20 (FRIKQKMAKAKKQN).

The protein belongs to the eukaryotic ribosomal protein eL39 family. In terms of assembly, component of the large ribosomal subunit (LSU). Mature yeast ribosomes consist of a small (40S) and a large (60S) subunit. The 40S small subunit contains 1 molecule of ribosomal RNA (18S rRNA) and 33 different proteins (encoded by 57 genes). The large 60S subunit contains 3 rRNA molecules (25S, 5.8S and 5S rRNA) and 46 different proteins (encoded by 81 genes). eL39 interacts with YIH1.

The protein localises to the cytoplasm. Its function is as follows. Component of the ribosome, a large ribonucleoprotein complex responsible for the synthesis of proteins in the cell. The small ribosomal subunit (SSU) binds messenger RNAs (mRNAs) and translates the encoded message by selecting cognate aminoacyl-transfer RNA (tRNA) molecules. The large subunit (LSU) contains the ribosomal catalytic site termed the peptidyl transferase center (PTC), which catalyzes the formation of peptide bonds, thereby polymerizing the amino acids delivered by tRNAs into a polypeptide chain. The nascent polypeptides leave the ribosome through a tunnel in the LSU and interact with protein factors that function in enzymatic processing, targeting, and the membrane insertion of nascent chains at the exit of the ribosomal tunnel. The polypeptide is Large ribosomal subunit protein eL39 (Saccharomyces cerevisiae (strain ATCC 204508 / S288c) (Baker's yeast)).